Consider the following 160-residue polypeptide: MTDAEQTIKNQKTQEAEQSLRVFLRSENATLPTRGSVLSAGYDIYASEEAVIPAQGQGLVGTDISVAVPIGTYGRVAPRSGLAVKHGISTGAGVIDADYRGEVKVVLFNHAQKDFTIQKGDRIAQLVLEKIVMADIKQITAEELDITARGEGGFGSTGKN.

S80, G93, D96, Y99, K104, R149, F154, and G155 together coordinate dUMP.

It belongs to the dUTPase family. As to quaternary structure, homotrimer. It depends on Mg(2+) as a cofactor.

The enzyme catalyses dUTP + H2O = dUMP + diphosphate + H(+). It participates in pyrimidine metabolism; dUMP biosynthesis; dUMP from dCTP (dUTP route): step 2/2. Functionally, involved in nucleotide metabolism via production of dUMP, the immediate precursor of thymidine nucleotides, and decreases the intracellular concentration of dUTP so that uracil cannot be incorporated into DNA. This Debaryomyces hansenii (strain ATCC 36239 / CBS 767 / BCRC 21394 / JCM 1990 / NBRC 0083 / IGC 2968) (Yeast) protein is Deoxyuridine 5'-triphosphate nucleotidohydrolase (DUT1).